A 376-amino-acid chain; its full sequence is Cyclin-dependent kinase 9-A (376 aa).

The 301-residue stretch at 19-319 folds into the Protein kinase domain; sequence YERLAKIGQG…SDDALNNDFF (301 aa). Residues 25 to 33 and Lys-48 contribute to the ATP site; that span reads IGQGTFGEV. The Proton acceptor role is filled by Asp-153. Residues 345-376 are disordered; that stretch reads PPRRRGGHMPQQPANQARNPAATNQSEFERVF. Residues 354–369 are compositionally biased toward low complexity; that stretch reads PQQPANQARNPAATNQ.

Belongs to the protein kinase superfamily. CMGC Ser/Thr protein kinase family. CDC2/CDKX subfamily. In terms of assembly, associates with cyclin-T to form P-TEFb.

It localises to the nucleus. It carries out the reaction L-seryl-[protein] + ATP = O-phospho-L-seryl-[protein] + ADP + H(+). The catalysed reaction is L-threonyl-[protein] + ATP = O-phospho-L-threonyl-[protein] + ADP + H(+). The enzyme catalyses [DNA-directed RNA polymerase] + ATP = phospho-[DNA-directed RNA polymerase] + ADP + H(+). Functionally, member of the cyclin-dependent kinase pair (CDK9/cyclin-T) complex, also called positive transcription elongation factor B (P-TEFb), which is proposed to facilitate the transition from abortive to production elongation by phosphorylating the CTD (C-terminal domain) of the large subunit of RNA polymerase II (RNAP II) and SUPT5H. The protein is Cyclin-dependent kinase 9-A (cdk9-a) of Xenopus laevis (African clawed frog).